A 278-amino-acid chain; its full sequence is MKKNRAFLKWAGGKYPLLDDIKRHLPKGECLVEPFVGAGSVFLNTDFSRYILADINSDLISLYNIVKLRTDEYVQASRELFMPETNQAEVYYQLREEFNTCQDPFRRAVLFLYLNRYGYNGLCRYNLRGEFNVPFGRYKRPYFPEAELYHFAEKAQNAFFYCESYADSMARADKSSVVYCDPPYAPLSATANFTAYHTNSFSLTQQAHLAEIAENLVSNRIPVLISNHDTALTREWYQLAKLHVVKVRRSISSNGGTRKKVDELLALYQPGVATPARK.

Residues Trp-10, Lys-14, Asp-54, and Asp-181 each contribute to the S-adenosyl-L-methionine site.

This sequence belongs to the N(4)/N(6)-methyltransferase family.

It catalyses the reaction a 2'-deoxyadenosine in DNA + S-adenosyl-L-methionine = an N(6)-methyl-2'-deoxyadenosine in DNA + S-adenosyl-L-homocysteine + H(+). In terms of biological role, an alpha subtype methylase, recognizes the double-stranded sequence 5'-GATC-3' and methylates A-2. May be involved in methyl-directed DNA mismatch repair, initiation of chromosome replication and gene expression. The sequence is that of DNA adenine methylase (dam) from Salmonella typhi.